The following is a 475-amino-acid chain: Ankyrin repeat, SAM and basic leucine zipper domain-containing protein 1 (475 aa).

The disordered stretch occupies residues methionine 1 to tryptophan 25. A phosphoserine mark is found at serine 17, serine 18, and serine 20. ANK repeat units follow at residues glutamate 45–serine 74, tyrosine 78–phenylalanine 107, aspartate 110–valine 144, arginine 148–threonine 177, asparagine 181–leucine 210, and aspartate 214–glycine 243. The SAM domain occupies serine 272 to glutamine 334.

As to quaternary structure, interacts with DDX4, PIWIL1, RANBP9 and TDRD1.

Its subcellular location is the cytoplasm. In terms of biological role, plays a central role during spermatogenesis by repressing transposable elements and preventing their mobilization, which is essential for the germline integrity. Acts via the piRNA metabolic process, which mediates the repression of transposable elements during meiosis by forming complexes composed of piRNAs and Piwi proteins and governs the methylation and subsequent repression of transposons. Its association with pi-bodies suggests a participation in the primary piRNAs metabolic process. Required prior to the pachytene stage to facilitate the production of multiple types of piRNAs, including those associated with repeats involved in the regulation of retrotransposons. May act by mediating protein-protein interactions during germ cell maturation. The sequence is that of Ankyrin repeat, SAM and basic leucine zipper domain-containing protein 1 (ASZ1) from Papio anubis (Olive baboon).